An 81-amino-acid chain; its full sequence is LTLVVVTIVCLDLGYTLTCLICPEEYCKRIHTCRDGENVCFKGFYEGKQLGKQFRRGCAATCPEGKPNEIVQCCSTDECNH.

The first 16 residues, 1-16 (LTLVVVTIVCLDLGYT), serve as a signal peptide directing secretion. 5 disulfide bridges follow: Cys-19–Cys-40, Cys-22–Cys-27, Cys-33–Cys-58, Cys-62–Cys-73, and Cys-74–Cys-79.

This sequence belongs to the three-finger toxin family. Ancestral subfamily. Orphan group II sub-subfamily. As to expression, expressed by the venom gland.

It localises to the secreted. Binds with low affinity to muscular (alpha-1-beta-1-delta-epsilon/CHRNA1-CHRNB1-CHRND-CHRNE) and very low affinity to neuronal (alpha-7/CHRNA7) nicotinic acetylcholine receptor (nAChR). In Ophiophagus hannah (King cobra), this protein is Weak neurotoxin OH-72.